The sequence spans 198 residues: MVTDGPAALAEFDRSGADIVLLDLMLPGMSGTDVYKQLRVRSSVPVIMVTARDSEIDKVVGLELGADDYVTKPYSARELIARIRAVLRRGGDDDSEISDGVLESGPLRMDVERHVVSVNGYAITLPLKEFDLLEYLMRNSGRVLTRGQLIDRVWGVDYVGDTKTLDVHVKRLRSKIEADPANPVHLVTVRGLGYKLES.

In terms of domain architecture, Response regulatory spans 1 to 87 (MVTDGPAALA…ELIARIRAVL (87 aa)). Asp23 bears the 4-aspartylphosphate mark. A DNA-binding region (ompR/PhoB-type) is located at residues 99-198 (DGVLESGPLR…VRGLGYKLES (100 aa)).

Post-translationally, phosphorylated by SenX3.

In terms of biological role, member of the two-component regulatory system SenX3/RegX3. In Mycobacterium leprae (strain TN), this protein is Sensory transduction protein RegX3 (rgx3).